A 187-amino-acid polypeptide reads, in one-letter code: MSKLIYIMGPSGSGKDSLMAEARLRLAAEAPVVFAHRYITRPADAGGENHVALSRAEFQLRLSRGLFALSWESHGFAYGIGREIDIWMESGLSVVVNGSRGALSAALQAYPELLPVLIDVPEHILRERLGARGREDAGEIEARLVRARMAVVEAPELVRFDNSGPLAERGQALAGLILETTISGRKS.

9–16 (GPSGSGKD) provides a ligand contact to ATP.

The protein belongs to the ribose 1,5-bisphosphokinase family.

It catalyses the reaction alpha-D-ribose 1,5-bisphosphate + ATP = 5-phospho-alpha-D-ribose 1-diphosphate + ADP. It participates in metabolic intermediate biosynthesis; 5-phospho-alpha-D-ribose 1-diphosphate biosynthesis; 5-phospho-alpha-D-ribose 1-diphosphate from D-ribose 5-phosphate (route II): step 3/3. Its function is as follows. Catalyzes the phosphorylation of ribose 1,5-bisphosphate to 5-phospho-D-ribosyl alpha-1-diphosphate (PRPP). The polypeptide is Ribose 1,5-bisphosphate phosphokinase PhnN (Desulfomicrobium baculatum (strain DSM 4028 / VKM B-1378 / X) (Desulfovibrio baculatus)).